Here is a 142-residue protein sequence, read N- to C-terminus: Large ribosomal subunit protein uL11 (142 aa).

It belongs to the universal ribosomal protein uL11 family. Part of the ribosomal stalk of the 50S ribosomal subunit. Interacts with L10 and the large rRNA to form the base of the stalk. L10 forms an elongated spine to which L12 dimers bind in a sequential fashion forming a multimeric L10(L12)X complex. In terms of processing, one or more lysine residues are methylated.

Functionally, forms part of the ribosomal stalk which helps the ribosome interact with GTP-bound translation factors. The polypeptide is Large ribosomal subunit protein uL11 (Mycobacteroides abscessus (strain ATCC 19977 / DSM 44196 / CCUG 20993 / CIP 104536 / JCM 13569 / NCTC 13031 / TMC 1543 / L948) (Mycobacterium abscessus)).